The sequence spans 306 residues: D-alanine--D-alanine ligase (306 aa).

An ATP-grasp domain is found at 102–300 (KIVVASVGVS…YGDIVQWMVE (199 aa)). 128–183 (PMEPPYVIKPVCEGSSLGVIIVKENESVPSLNVVGSEWVYADTVIVEKYIPGRELT) provides a ligand contact to ATP. Positions 253, 267, and 269 each coordinate Mg(2+).

The protein belongs to the D-alanine--D-alanine ligase family. The cofactor is Mg(2+). It depends on Mn(2+) as a cofactor.

The protein resides in the cytoplasm. The catalysed reaction is 2 D-alanine + ATP = D-alanyl-D-alanine + ADP + phosphate + H(+). It participates in cell wall biogenesis; peptidoglycan biosynthesis. Cell wall formation. The polypeptide is D-alanine--D-alanine ligase (Bartonella henselae (strain ATCC 49882 / DSM 28221 / CCUG 30454 / Houston 1) (Rochalimaea henselae)).